We begin with the raw amino-acid sequence, 363 residues long: Phospho-N-acetylmuramoyl-pentapeptide-transferase (363 aa).

11 helical membrane passes run Ala27–Ala47, Thr76–Leu96, Thr97–Ala117, Leu137–Ala157, Trp171–Gly191, Gly202–Val222, Val226–Cys246, Ala248–Met268, Thr271–Leu291, Val292–Phe312, and Lys340–Leu360.

This sequence belongs to the glycosyltransferase 4 family. MraY subfamily. Requires Mg(2+) as cofactor.

It is found in the cell inner membrane. It carries out the reaction UDP-N-acetyl-alpha-D-muramoyl-L-alanyl-gamma-D-glutamyl-meso-2,6-diaminopimeloyl-D-alanyl-D-alanine + di-trans,octa-cis-undecaprenyl phosphate = di-trans,octa-cis-undecaprenyl diphospho-N-acetyl-alpha-D-muramoyl-L-alanyl-D-glutamyl-meso-2,6-diaminopimeloyl-D-alanyl-D-alanine + UMP. It functions in the pathway cell wall biogenesis; peptidoglycan biosynthesis. Functionally, catalyzes the initial step of the lipid cycle reactions in the biosynthesis of the cell wall peptidoglycan: transfers peptidoglycan precursor phospho-MurNAc-pentapeptide from UDP-MurNAc-pentapeptide onto the lipid carrier undecaprenyl phosphate, yielding undecaprenyl-pyrophosphoryl-MurNAc-pentapeptide, known as lipid I. The protein is Phospho-N-acetylmuramoyl-pentapeptide-transferase of Gluconacetobacter diazotrophicus (strain ATCC 49037 / DSM 5601 / CCUG 37298 / CIP 103539 / LMG 7603 / PAl5).